A 452-amino-acid chain; its full sequence is Asparagine--tRNA ligase (452 aa).

It belongs to the class-II aminoacyl-tRNA synthetase family. In terms of assembly, homodimer.

The protein resides in the cytoplasm. It carries out the reaction tRNA(Asn) + L-asparagine + ATP = L-asparaginyl-tRNA(Asn) + AMP + diphosphate + H(+). The protein is Asparagine--tRNA ligase of Mycoplasma mycoides subsp. mycoides SC (strain CCUG 32753 / NCTC 10114 / PG1).